The chain runs to 209 residues: Chaperone protein TorD (209 aa).

The protein belongs to the TorD/DmsD family. TorD subfamily.

It is found in the cytoplasm. Involved in the biogenesis of TorA. Acts on TorA before the insertion of the molybdenum cofactor and, as a result, probably favors a conformation of the apoenzyme that is competent for acquiring the cofactor. The protein is Chaperone protein TorD of Shewanella baltica (strain OS185).